The following is a 579-amino-acid chain: ATP-dependent lipid A-core flippase (579 aa).

4 consecutive transmembrane segments (helical) span residues 24–44 (FLAAVVGYAIYAASSTALAEM), 61–81 (LMLPLFVIGMFAARGVGTFLG), 147–167 (LFVIGLVSYLLWTNWMLTLIF), and 253–273 (LLVALSLAGLVWLAMSPALMA). Residues 25–306 (LAAVVGYAIY…LTEVNSTIQK (282 aa)) form the ABC transmembrane type-1 domain. The ABC transporter domain maps to 338–573 (VRFEGVRFRY…DGAYAALHQL (236 aa)). Residue 372 to 379 (GRSGSGKS) participates in ATP binding.

This sequence belongs to the ABC transporter superfamily. Lipid exporter (TC 3.A.1.106) family. As to quaternary structure, homodimer.

The protein localises to the cell inner membrane. It catalyses the reaction ATP + H2O + lipid A-core oligosaccharideSide 1 = ADP + phosphate + lipid A-core oligosaccharideSide 2.. Involved in lipopolysaccharide (LPS) biosynthesis. Translocates lipid A-core from the inner to the outer leaflet of the inner membrane. Transmembrane domains (TMD) form a pore in the inner membrane and the ATP-binding domain (NBD) is responsible for energy generation. The polypeptide is ATP-dependent lipid A-core flippase (Chromohalobacter salexigens (strain ATCC BAA-138 / DSM 3043 / CIP 106854 / NCIMB 13768 / 1H11)).